The following is a 259-amino-acid chain: Histidinol-phosphatase (259 aa).

The Mg(2+) site is built by E66, D82, I84, D85, and D207. E66 is a binding site for substrate. Residues 84-87 (IDGT) and D207 each bind substrate.

Belongs to the inositol monophosphatase superfamily. Requires Mg(2+) as cofactor.

The catalysed reaction is L-histidinol phosphate + H2O = L-histidinol + phosphate. Its pathway is amino-acid biosynthesis; L-histidine biosynthesis; L-histidine from 5-phospho-alpha-D-ribose 1-diphosphate: step 8/9. Functionally, catalyzes the dephosphorylation of histidinol-phosphate to histidinol, the direct precursor of histidine. In Chlorobaculum parvum (strain DSM 263 / NCIMB 8327) (Chlorobium vibrioforme subsp. thiosulfatophilum), this protein is Histidinol-phosphatase (hisN).